The sequence spans 569 residues: Probable diguanylate cyclase DgcQ (569 aa).

The next 2 membrane-spanning stretches (helical) occupy residues 25–45 (LGPGHVVNLCFIVVLLFSTLL) and 365–385 (IALTLLWALFTTMLLISWYVI). In terms of domain architecture, GGDEF spans 433–568 (HPFSVIQVDL…GRNRVCASDN (136 aa)). Aspartate 441 contacts Mg(2+). Substrate is bound by residues asparagine 449, histidine 454, and aspartate 458. Glutamate 484 contacts Mg(2+). Glutamate 484 serves as the catalytic Proton acceptor.

As to quaternary structure, homodimer. Mg(2+) is required as a cofactor.

Its subcellular location is the cell inner membrane. The enzyme catalyses 2 GTP = 3',3'-c-di-GMP + 2 diphosphate. Its pathway is glycan metabolism; bacterial cellulose biosynthesis. It functions in the pathway purine metabolism; 3',5'-cyclic di-GMP biosynthesis. Catalyzes the synthesis of cyclic-di-GMP (c-di-GMP) via the condensation of 2 GTP molecules. Cyclic-di-GMP is a second messenger which controls cell surface-associated traits in bacteria. Involved in the regulation of cellulose production. This is Probable diguanylate cyclase DgcQ from Shigella sonnei (strain Ss046).